Consider the following 724-residue polypeptide: Catalase-peroxidase (724 aa).

Residues 98–226 (WHAAGTYRIA…LAAVMMGLIY (129 aa)) constitute a cross-link (tryptophyl-tyrosyl-methioninium (Trp-Tyr) (with M-252)). Catalysis depends on His99, which acts as the Proton acceptor. A cross-link (tryptophyl-tyrosyl-methioninium (Tyr-Met) (with W-98)) is located at residues 226–252 (YVNPEGVDGNPDPLKTAHDIRVTFERM). Heme b is bound at residue His267.

The protein belongs to the peroxidase family. Peroxidase/catalase subfamily. In terms of assembly, homodimer or homotetramer. It depends on heme b as a cofactor. Formation of the three residue Trp-Tyr-Met cross-link is important for the catalase, but not the peroxidase activity of the enzyme.

It catalyses the reaction H2O2 + AH2 = A + 2 H2O. The enzyme catalyses 2 H2O2 = O2 + 2 H2O. In terms of biological role, bifunctional enzyme with both catalase and broad-spectrum peroxidase activity. The sequence is that of Catalase-peroxidase from Psychromonas ingrahamii (strain DSM 17664 / CCUG 51855 / 37).